A 196-amino-acid polypeptide reads, in one-letter code: Protein Flattop (196 aa).

Positions asparagine 107 to valine 196 are disordered. The span at isoleucine 113–lysine 124 shows a compositional bias: basic and acidic residues. The span at alanine 137 to serine 149 shows a compositional bias: low complexity. Residues asparagine 150–proline 162 are compositionally biased toward polar residues.

Belongs to the Flattop family. Microtubule inner protein component of sperm flagellar doublet microtubules. Interacts with DLG3. In terms of tissue distribution, expressed in trachea multiciliated cells.

The protein localises to the cytoplasm. Its subcellular location is the cytoskeleton. It is found in the cilium basal body. It localises to the cell projection. The protein resides in the cilium. The protein localises to the apical cell membrane. Its subcellular location is the cilium axoneme. It is found in the flagellum axoneme. Functionally, microtubule inner protein (MIP) part of the dynein-decorated doublet microtubules (DMTs) in cilia axoneme. Acts as a regulator of cilium basal body docking and positioning in mono- and multiciliated cells. Regulates basal body docking and cilia formation in multiciliated lung cells. Regulates kinocilium positioning and stereocilia bundle morphogenesis in the inner ear. This is Protein Flattop from Bos taurus (Bovine).